Consider the following 161-residue polypeptide: Ribonuclease H (161 aa).

The region spanning threonine 2–asparagine 141 is the RNase H type-1 domain. Residues aspartate 11, glutamate 46, aspartate 69, and aspartate 133 each coordinate Mg(2+).

Belongs to the RNase H family. Monomer. Mg(2+) serves as cofactor.

It localises to the cytoplasm. The catalysed reaction is Endonucleolytic cleavage to 5'-phosphomonoester.. Endonuclease that specifically degrades the RNA of RNA-DNA hybrids. The chain is Ribonuclease H from Tropheryma whipplei (strain TW08/27) (Whipple's bacillus).